A 448-amino-acid chain; its full sequence is Biotin carboxylase (448 aa).

The 445-residue stretch at 1–445 (MLEKVVIANR…NIHYLEKKLG (445 aa)) folds into the Biotin carboxylation domain. Residues K116, K159, 165-166 (GG), 201-204 (EKYL), H209, and H236 contribute to the ATP site. The ATP-grasp domain maps to 120 to 317 (IKAMKKAGVP…LVKEQLRIAA (198 aa)). Hydrogencarbonate is bound at residue K238. E276 and E288 together coordinate ATP. Residues E276, E288, and N290 each coordinate Mg(2+). The Mn(2+) site is built by E276, E288, and N290. Positions 292, 295, and 338 each coordinate hydrogencarbonate. The active site involves R292. R338 serves as a coordination point for biotin.

Acetyl-CoA carboxylase is a heterohexamer of biotin carboxyl carrier protein, biotin carboxylase and the two subunits of carboxyl transferase in a 2:2 complex. Requires Mg(2+) as cofactor. It depends on Mn(2+) as a cofactor.

It catalyses the reaction N(6)-biotinyl-L-lysyl-[protein] + hydrogencarbonate + ATP = N(6)-carboxybiotinyl-L-lysyl-[protein] + ADP + phosphate + H(+). It participates in lipid metabolism; malonyl-CoA biosynthesis; malonyl-CoA from acetyl-CoA: step 1/1. This protein is a component of the acetyl coenzyme A carboxylase complex; first, biotin carboxylase catalyzes the carboxylation of the carrier protein and then the transcarboxylase transfers the carboxyl group to form malonyl-CoA. This is Biotin carboxylase (accC) from Haemophilus influenzae (strain ATCC 51907 / DSM 11121 / KW20 / Rd).